Consider the following 485-residue polypeptide: Solute carrier family 35 member F4 (485 aa).

2 stretches are compositionally biased toward polar residues: residues 32–42 and 50–64; these read SQKSTTRSSVT and CPSS…LSPL. Disordered regions lie at residues 32–64 and 78–111; these read SQKS…LSPL and QSRG…SSQE. The segment covering 88–98 has biased composition (basic and acidic residues); that stretch reads RRVERQSRSGD. The span at 99 to 111 shows a compositional bias: polar residues; it reads DGTQTRPESSSQE. The next 10 helical transmembrane spans lie at 129-149, 156-176, 217-234, 241-261, 265-285, 294-314, 329-349, 359-381, 383-405, and 414-434; these read IWGL…TQIV, FYCP…FFPV, APFS…LLAL, DVSA…WIVL, FMGV…MMAY, IIGV…KVLF, FVST…IILY, FAAL…NILV, VGVV…PGNA, and VIFN…FLLM. One can recognise an EamA domain in the interval 225–285; that stretch reads LTNYLYLLAL…AITGIVMMAY (61 aa).

Belongs to the SLC35F solute transporter family.

It localises to the membrane. Functionally, putative solute transporter. The chain is Solute carrier family 35 member F4 (Slc35f4) from Mus musculus (Mouse).